A 363-amino-acid chain; its full sequence is Mitochondrial RNA-splicing protein MRS1 (363 aa).

It localises to the mitochondrion. Function in mitochondrial RNA splicing in the excision of mitochondrial group I introns aI1 and aI5 beta from COX1 and bI3 from COB transcripts and thus would be involved in obtaining the correct structure of the intron, to allow the RNA catalyzed reactions to occur. The sequence is that of Mitochondrial RNA-splicing protein MRS1 (MRS1) from Saccharomyces paradoxus (Yeast).